The chain runs to 143 residues: Transcriptional regulator MraZ (143 aa).

2 SpoVT-AbrB domains span residues 5 to 47 (EFDH…TLEE) and 76 to 119 (AVEV…DRET).

The protein belongs to the MraZ family. Forms oligomers.

It is found in the cytoplasm. The protein localises to the nucleoid. The sequence is that of Transcriptional regulator MraZ from Staphylococcus epidermidis (strain ATCC 35984 / DSM 28319 / BCRC 17069 / CCUG 31568 / BM 3577 / RP62A).